Reading from the N-terminus, the 745-residue chain is Cytoskeleton-associated protein 2-like (745 aa).

Disordered regions lie at residues 26-305 (KGKL…VNRV), 319-362 (PATE…LGPQ), 422-483 (FPPQ…TYKR), and 608-638 (EAVT…PCPS). Polar residues-rich tracts occupy residues 67 to 89 (SKTT…ASQK) and 101 to 136 (GLTS…SRNP). The KEN box motif lies at 183–185 (KEN). Residues 192–202 (KPEKPDPELHS) are compositionally biased toward basic and acidic residues. Residue Lys-195 forms a Glycyl lysine isopeptide (Lys-Gly) (interchain with G-Cter in SUMO1); alternate linkage. A Glycyl lysine isopeptide (Lys-Gly) (interchain with G-Cter in SUMO2); alternate cross-link involves residue Lys-195. 4 stretches are compositionally biased toward polar residues: residues 205–216 (KPNTGSSNQTQK), 224–233 (LSKSSVTQTA), 242–253 (FIRNTQIRTQAV), and 284–301 (NKTQ…QDIT). Over residues 427 to 442 (HFLNKTAPRTQASTAA) the composition is skewed to polar residues. Residues 459–475 (KKPEGEDRRKQLEEWQK) are compositionally biased toward basic and acidic residues. The span at 608–624 (EAVTSDTSAAGTNTTSA) shows a compositional bias: polar residues. At Ser-745 the chain carries Phosphoserine.

The protein belongs to the CKAP2 family. Post-translationally, ubiquitinated by the anaphase promoting complex/cyclosome (APC/C). In terms of tissue distribution, highly expressed in regions of active neurogenesis and neural stem/progenitor cells (NSPCs), both embryonic and adult, not detected in lung, liver, kidney, heart, and skeletal muscle.

The protein localises to the cytoplasm. Its subcellular location is the cytoskeleton. It is found in the spindle pole. Microtubule-associated protein required for mitotic spindle formation and cell-cycle progression in neural progenitor cells. The sequence is that of Cytoskeleton-associated protein 2-like (Ckap2l) from Mus musculus (Mouse).